A 592-amino-acid polypeptide reads, in one-letter code: Aspartate--tRNA ligase (592 aa).

E171 is a binding site for L-aspartate. The segment at 195–198 (QLFK) is aspartate. R217 serves as a coordination point for L-aspartate. ATP contacts are provided by residues 217 to 219 (RDE) and Q226. H448 contacts L-aspartate. E482 provides a ligand contact to ATP. R489 contacts L-aspartate. Residue 534-537 (GLDR) participates in ATP binding.

This sequence belongs to the class-II aminoacyl-tRNA synthetase family. Type 1 subfamily. Homodimer.

It is found in the cytoplasm. It catalyses the reaction tRNA(Asp) + L-aspartate + ATP = L-aspartyl-tRNA(Asp) + AMP + diphosphate. Its function is as follows. Catalyzes the attachment of L-aspartate to tRNA(Asp) in a two-step reaction: L-aspartate is first activated by ATP to form Asp-AMP and then transferred to the acceptor end of tRNA(Asp). The chain is Aspartate--tRNA ligase from Pseudoalteromonas translucida (strain TAC 125).